We begin with the raw amino-acid sequence, 449 residues long: Ribosomal protein uS12 methylthiotransferase RimO (449 aa).

An MTTase N-terminal domain is found at 5 to 116 (PTIAISHLGC…IVDVVQRVEN (112 aa)). Residues cysteine 14, cysteine 50, cysteine 79, cysteine 154, cysteine 158, and cysteine 161 each coordinate [4Fe-4S] cluster. Positions 140-369 (TTTEGVAYLR…MEVQQPISIK (230 aa)) constitute a Radical SAM core domain. The TRAM domain maps to 372 to 438 (QNCIGQTVPV…VYDLYGKTNL (67 aa)).

The protein belongs to the methylthiotransferase family. RimO subfamily. [4Fe-4S] cluster is required as a cofactor.

It is found in the cytoplasm. The catalysed reaction is L-aspartate(89)-[ribosomal protein uS12]-hydrogen + (sulfur carrier)-SH + AH2 + 2 S-adenosyl-L-methionine = 3-methylsulfanyl-L-aspartate(89)-[ribosomal protein uS12]-hydrogen + (sulfur carrier)-H + 5'-deoxyadenosine + L-methionine + A + S-adenosyl-L-homocysteine + 2 H(+). Its function is as follows. Catalyzes the methylthiolation of an aspartic acid residue of ribosomal protein uS12. This chain is Ribosomal protein uS12 methylthiotransferase RimO, found in Rippkaea orientalis (strain PCC 8801 / RF-1) (Cyanothece sp. (strain PCC 8801)).